We begin with the raw amino-acid sequence, 401 residues long: Probable sodium/metabolite cotransporter BASS1, chloroplastic (401 aa).

The N-terminal 70 residues, Met1–Arg70, are a transit peptide targeting the chloroplast. A run of 9 helical transmembrane segments spans residues Phe92–Gly112, Val122–Leu142, Glu156–Ser176, Ala187–Ile207, Val212–Leu232, Leu247–Leu267, Val278–Ile298, Gln311–Ser331, and Val371–Trp391.

It belongs to the bile acid:sodium symporter (BASS) (TC 2.A.28) family.

The protein resides in the membrane. It is found in the plastid. It localises to the chloroplast envelope. Its function is as follows. May function as sodium-coupled metabolite transporter across the chloroplast envelope. The sequence is that of Probable sodium/metabolite cotransporter BASS1, chloroplastic (BASS1) from Arabidopsis thaliana (Mouse-ear cress).